The following is a 331-amino-acid chain: Flotillin-like protein FloA (331 aa).

A run of 2 helical transmembrane segments spans residues 6–26 and 28–48; these read LMIL…FTFV and VMLW…TLVG. A required for correct localization region spans residues 236–331; that stretch reads QTDQAEADKN…KDPSDEDRKS (96 aa). Short sequence motifs (EA repeat) lie at residues 240–242, 251–253, 278–282, and 288–290; these read AEA, AEE, and EAEAE. A disordered region spans residues 312 to 331; that stretch reads EMRDSFGKLTKDPSDEDRKS.

Belongs to the flotillin-like FloA family. As to quaternary structure, homooligomerizes. Interacts with FloT. Interacts with FtsH midcell. Interacts with PhoR, colocalizes with PhoR in FloA-only membrane rafts.

Its subcellular location is the cell membrane. The protein resides in the membrane raft. In terms of biological role, found in functional membrane microdomains (FMM) that may be equivalent to eukaryotic membrane rafts. FMMs are highly dynamic and increase in number as cells age. FloA and FloT function is partially redundant; double deletions have marked synthetic phenotypes. Flotillins are thought to be important factors in membrane fluidity, especially during periods of rapid growth in rich media. Whether specific proteins are associated with FMMs is controversial; in one study FloT rafts have been shown to include proteins involved in adaptation to stationary phase, while FloA-FloT rafts include proteins involved in differentiation including sporulation, biofilm formation and DNA uptake competence. Another (more finely resolved) study only showed association of NfeD2 with FloT rafts of all the proteins examined. Involved in spatial organization of membranes, perhaps recruiting proteins to specific membrane regions. Simultaneous overexpression of both FloA and FloT leads to defects in cell division and differentiation, in part caused by stabilization of FtsH and its subsequent increased ability to degrade proteins. Cells make more biofilm, are about half as long, have less EzrA and more frequent Z-rings. The sequence is that of Flotillin-like protein FloA from Bacillus subtilis (strain 168).